The primary structure comprises 94 residues: Putative septation protein SpoVG (94 aa).

Belongs to the SpoVG family.

Could be involved in septation. This Acholeplasma laidlawii (strain PG-8A) protein is Putative septation protein SpoVG.